The primary structure comprises 310 residues: Cytochrome f (310 aa).

Positions 1–23 are cleaved as a signal peptide; it reads MRRLIPILLGSLVLSLSILVAPA. Positions 28, 48, 51, and 52 each coordinate heme. A helical transmembrane segment spans residues 277–297; it reads IYGLLAFFVAVSLAQILLVLK.

Belongs to the cytochrome f family. As to quaternary structure, the 4 large subunits of the cytochrome b6-f complex are cytochrome b6, subunit IV (17 kDa polypeptide, PetD), cytochrome f and the Rieske protein, while the 4 small subunits are PetG, PetL, PetM and PetN. The complex functions as a dimer. Heme is required as a cofactor.

It is found in the cellular thylakoid membrane. Its function is as follows. Component of the cytochrome b6-f complex, which mediates electron transfer between photosystem II (PSII) and photosystem I (PSI), cyclic electron flow around PSI, and state transitions. This Prochlorococcus marinus (strain MIT 9313) protein is Cytochrome f.